Here is a 240-residue protein sequence, read N- to C-terminus: Ubiquinone biosynthesis O-methyltransferase (240 aa).

R44, G64, D85, and M129 together coordinate S-adenosyl-L-methionine.

It belongs to the methyltransferase superfamily. UbiG/COQ3 family.

The catalysed reaction is a 3-demethylubiquinol + S-adenosyl-L-methionine = a ubiquinol + S-adenosyl-L-homocysteine + H(+). It catalyses the reaction a 3-(all-trans-polyprenyl)benzene-1,2-diol + S-adenosyl-L-methionine = a 2-methoxy-6-(all-trans-polyprenyl)phenol + S-adenosyl-L-homocysteine + H(+). The protein operates within cofactor biosynthesis; ubiquinone biosynthesis. Its function is as follows. O-methyltransferase that catalyzes the 2 O-methylation steps in the ubiquinone biosynthetic pathway. This is Ubiquinone biosynthesis O-methyltransferase from Escherichia fergusonii (strain ATCC 35469 / DSM 13698 / CCUG 18766 / IAM 14443 / JCM 21226 / LMG 7866 / NBRC 102419 / NCTC 12128 / CDC 0568-73).